We begin with the raw amino-acid sequence, 130 residues long: Small ribosomal subunit protein bS6 (130 aa).

The interval 100–130 (SPMVKAKDERRERHDFASEANDDSEAGDSEE) is disordered. Over residues 104-116 (KAKDERRERHDFA) the composition is skewed to basic and acidic residues. Acidic residues predominate over residues 119–130 (ANDDSEAGDSEE).

It belongs to the bacterial ribosomal protein bS6 family.

Functionally, binds together with bS18 to 16S ribosomal RNA. The polypeptide is Small ribosomal subunit protein bS6 (Yersinia pestis (strain Pestoides F)).